The sequence spans 510 residues: Inositol-3-phosphate synthase (510 aa).

Positions 70, 71, 72, 73, 143, 180, 190, 193, 230, 231, 232, 233, 281, 282, 306, 309, 340, 341, 342, 355, 393, 394, 422, and 423 each coordinate NAD(+).

The protein belongs to the myo-inositol 1-phosphate synthase family. NAD(+) serves as cofactor.

The protein resides in the cytoplasm. The protein localises to the cytosol. It is found in the nucleus. The catalysed reaction is D-glucose 6-phosphate = 1D-myo-inositol 3-phosphate. The protein operates within polyol metabolism; myo-inositol biosynthesis; myo-inositol from D-glucose 6-phosphate: step 1/2. Its function is as follows. Key enzyme in myo-inositol biosynthesis pathway that catalyzes the conversion of glucose 6-phosphate to 1-myo-inositol 1-phosphate in a NAD-dependent manner. In Hordeum vulgare (Barley), this protein is Inositol-3-phosphate synthase.